Reading from the N-terminus, the 1432-residue chain is Gag-Pol polyprotein (1432 aa).

2 CCHC-type zinc fingers span residues 368-385 (QRCYGCGKPGHIRRDCKN) and 386-403 (QKCFKCGKPGHLQRNCKS). One can recognise a Peptidase A2 domain in the interval 452-525 (VRALIDTGAD…TPVNLLGRSV (74 aa)). Asp457 serves as the catalytic For protease activity; shared with dimeric partner. The Reverse transcriptase domain maps to 579-766 (DGKISRTPWD…EQVQWLGYEL (188 aa)). Mg(2+) contacts are provided by Asp645, Asp720, and Asp721. The stretch at 815–843 (KGKTDLKDKIKLTEEAIQCLETVNKRLKD) forms a coiled coil. Residues 959–1079 (IERYPTYYTD…VDQEVQKALQ (121 aa)) form the RNase H type-1 domain. Mg(2+) contacts are provided by Asp968, Glu999, Asp1019, and Asp1071. An Integrase-type zinc finger spans residues 1157 to 1198 (EAIPQAIEEHEKWHTTAEILAREFQLPRRVAREIVHRCQACK). Positions 1166, 1170, 1194, and 1197 each coordinate Zn(2+). One can recognise an Integrase catalytic domain in the interval 1206–1358 (RGTNPRERFL…TPYEIYLESE (153 aa)). Residues Asp1219 and Asp1271 each contribute to the Mg(2+) site. The segment at residues 1376–1422 (KWAYVRDKRKVWKGPYKVLWDGEGAAVVEENAMPTLYPHRHMRFIPP) is a DNA-binding region (integrase-type).

In terms of processing, specific enzymatic cleavages by the viral protease yield mature proteins. The protease is released by autocatalytic cleavage. The polyprotein is cleaved during and after budding, this process is termed maturation.

It localises to the virion. It carries out the reaction DNA(n) + a 2'-deoxyribonucleoside 5'-triphosphate = DNA(n+1) + diphosphate. The catalysed reaction is Endohydrolysis of RNA in RNA/DNA hybrids. Three different cleavage modes: 1. sequence-specific internal cleavage of RNA. Human immunodeficiency virus type 1 and Moloney murine leukemia virus enzymes prefer to cleave the RNA strand one nucleotide away from the RNA-DNA junction. 2. RNA 5'-end directed cleavage 13-19 nucleotides from the RNA end. 3. DNA 3'-end directed cleavage 15-20 nucleotides away from the primer terminus.. The enzyme catalyses 3'-end directed exonucleolytic cleavage of viral RNA-DNA hybrid.. In terms of biological role, matrix protein p16 forms the outer shell of the core of the virus, lining the inner surface of the viral membrane. Capsid protein p26 forms the conical core of the virus that encapsulates the genomic RNA-nucleocapsid complex. Its function is as follows. The aspartyl protease mediates proteolytic cleavages of Gag and Gag-Pol polyproteins during or shortly after the release of the virion from the plasma membrane. Cleavages take place as an ordered, step-wise cascade to yield mature proteins. This process is called maturation. Displays maximal activity during the budding process just prior to particle release from the cell. Functionally, reverse transcriptase/ribonuclease H (RT) is a multifunctional enzyme that converts the viral RNA genome into dsDNA in the cytoplasm, shortly after virus entry into the cell. This enzyme displays a DNA polymerase activity that can copy either DNA or RNA templates, and a ribonuclease H (RNase H) activity that cleaves the RNA strand of RNA-DNA heteroduplexes in a partially processive 3' to 5' endonucleasic mode. Conversion of viral genomic RNA into dsDNA requires many steps. A tRNA binds to the primer-binding site (PBS) situated at the 5'-end of the viral RNA. RT uses the 3' end of the tRNA primer to perform a short round of RNA-dependent minus-strand DNA synthesis. The reading proceeds through the U5 region and ends after the repeated (R) region which is present at both ends of viral RNA. The portion of the RNA-DNA heteroduplex is digested by the RNase H, resulting in a ssDNA product attached to the tRNA primer. This ssDNA/tRNA hybridizes with the identical R region situated at the 3' end of viral RNA. This template exchange, known as minus-strand DNA strong stop transfer, can be either intra- or intermolecular. RT uses the 3' end of this newly synthesized short ssDNA to perform the RNA-dependent minus-strand DNA synthesis of the whole template. RNase H digests the RNA template except for a polypurine tract (PPT) situated at the 5'-end of the genome. It is not clear if both polymerase and RNase H activities are simultaneous. RNase H probably can proceed both in a polymerase-dependent (RNA cut into small fragments by the same RT performing DNA synthesis) and a polymerase-independent mode (cleavage of remaining RNA fragments by free RTs). Secondly, RT performs DNA-directed plus-strand DNA synthesis using the PPT that has not been removed by RNase H as primer. PPT and tRNA primers are then removed by RNase H. The 3' and 5' ssDNA PBS regions hybridize to form a circular dsDNA intermediate. Strand displacement synthesis by RT to the PBS and PPT ends produces a blunt ended, linear dsDNA copy of the viral genome that includes long terminal repeats (LTRs) at both ends. In terms of biological role, integrase catalyzes viral DNA integration into the host chromosome, by performing a series of DNA cutting and joining reactions. This enzyme activity takes place after virion entry into a cell and reverse transcription of the RNA genome in dsDNA. This is Gag-Pol polyprotein (gag-pol) from Jembrana disease virus (JDV).